The sequence spans 633 residues: Lysophospholipase 1 (633 aa).

Positions 1 to 20 (MKTTTVACAVAGLLFSCVSG) are cleaved as a signal peptide. A PLA2c domain is found at 47 to 594 (GCPASRPTIR…QRYCWDGSLN (548 aa)). N-linked (GlcNAc...) asparagine glycosylation is found at Asn-64, Asn-104, Asn-139, Asn-173, Asn-246, Asn-290, Asn-329, Asn-358, Asn-397, Asn-450, Asn-463, Asn-469, Asn-497, Asn-500, Asn-521, Asn-549, Asn-555, and Asn-594. Ser-609 carries the GPI-like-anchor amidated serine lipid modification. A propeptide spans 610 to 633 (AASGIIPSISTVAMAVVFAAWTIF) (removed in mature form).

It belongs to the lysophospholipase family. In terms of processing, the GPI-like anchor contains a phosphoceramide lipid group. The anchor position has not been determined.

Its subcellular location is the cell membrane. It carries out the reaction a 1-acyl-sn-glycero-3-phosphocholine + H2O = sn-glycerol 3-phosphocholine + a fatty acid + H(+). Functionally, catalyzes the release of fatty acids from lysophospholipids. The protein is Lysophospholipase 1 (plb1) of Aspergillus fumigatus (strain CBS 144.89 / FGSC A1163 / CEA10) (Neosartorya fumigata).